A 151-amino-acid chain; its full sequence is Large ribosomal subunit protein bL17 (151 aa).

Residues 118–151 (EAKQPPRKEKAKKPAPVQAEEASATPASEEKAQD) are disordered. Low complexity predominate over residues 131-144 (PAPVQAEEASATPA).

The protein belongs to the bacterial ribosomal protein bL17 family. Part of the 50S ribosomal subunit. Contacts protein L32.

The chain is Large ribosomal subunit protein bL17 from Syntrophobacter fumaroxidans (strain DSM 10017 / MPOB).